Consider the following 431-residue polypeptide: MKNVDIFKESEEYMPGGVNSPVRAFKGVNLNPPIIKSGKGVIIKDEEDNEYIDFVLAWGPLILGHCDDDVVEAIKEVSSMALAFGAPTKLELDLAKFICTNLDNVEMIRMVNSGTEATMSAVKLARGYTKRKRIVKFAGCYHGHFDGFLIEAGSGVMTGGIPGSLGVPNESIENTLIGIYNDKEQITELFKKYGNEIAGVIIEPVAGNMGVIKSENDFMETLRDLCNQYGSLLIFDEVMSGFRVAFKGAQSLFNVKPDLVTYAKIMGGGLPCGAYGGRKEIMKNLSPLGGVYQAGTMSGNPIVMAAGIATLNKLKNNQNYYDHIENIGARLEEGIINISKKYDLPVVMNRVGGMMTLFFNDLKEVRTYDDVKKCDVNRFNRYFEHMLKSGFNLPPSQFEALFLSVQHKESHIDAFLKAFEEFALNENKMSL.

Position 264 is an N6-(pyridoxal phosphate)lysine (Lys-264).

It belongs to the class-III pyridoxal-phosphate-dependent aminotransferase family. HemL subfamily. In terms of assembly, homodimer. The cofactor is pyridoxal 5'-phosphate.

It localises to the cytoplasm. It carries out the reaction (S)-4-amino-5-oxopentanoate = 5-aminolevulinate. It functions in the pathway porphyrin-containing compound metabolism; protoporphyrin-IX biosynthesis; 5-aminolevulinate from L-glutamyl-tRNA(Glu): step 2/2. The protein is Glutamate-1-semialdehyde 2,1-aminomutase of Clostridium beijerinckii (strain ATCC 51743 / NCIMB 8052) (Clostridium acetobutylicum).